Reading from the N-terminus, the 806-residue chain is ATP-dependent zinc metalloprotease FTSH 11, chloroplastic/mitochondrial (806 aa).

The N-terminal 63 residues, 1 to 63, are a transit peptide targeting the chloroplast and mitochondrion; sequence MSSSTLQASL…RFRPLPCSLR (63 aa). Residues 106-116 are compositionally biased toward basic and acidic residues; that stretch reads FVGGEETKSGG. Positions 106 to 130 are disordered; the sequence is FVGGEETKSGGEEAEVSNGVTEGKE. The helical transmembrane segment at 301-321 threads the bilayer; it reads LVSTILFTVAVGLVWIMGAAA. ATP is bound at residue 402 to 409; sequence GAPGTGKT. H620 contributes to the Zn(2+) binding site. The active site involves E621. H624 and D698 together coordinate Zn(2+).

This sequence in the N-terminal section; belongs to the AAA ATPase family. It in the C-terminal section; belongs to the peptidase M41 family. Homooligomer. Zn(2+) serves as cofactor.

The protein resides in the mitochondrion inner membrane. It localises to the plastid. Its subcellular location is the chloroplast thylakoid membrane. Probable ATP-dependent zinc metallopeptidase. Involved in the assembly and/or stability of the complexes I and V. Involved in thermotolerance but not in high light stress resistance or in the assembly/stability of the complexes I and V of the mitochondrial oxidative phosphorylation system. This Arabidopsis thaliana (Mouse-ear cress) protein is ATP-dependent zinc metalloprotease FTSH 11, chloroplastic/mitochondrial (FTSH11).